A 146-amino-acid polypeptide reads, in one-letter code: Large ribosomal subunit protein bL9 (146 aa).

This sequence belongs to the bacterial ribosomal protein bL9 family.

In terms of biological role, binds to the 23S rRNA. The protein is Large ribosomal subunit protein bL9 of Flavobacterium johnsoniae (strain ATCC 17061 / DSM 2064 / JCM 8514 / BCRC 14874 / CCUG 350202 / NBRC 14942 / NCIMB 11054 / UW101) (Cytophaga johnsonae).